The following is a 491-amino-acid chain: (S)-canadine synthase (491 aa).

A helical membrane pass occupies residues L6–F26. C434 provides a ligand contact to heme.

It belongs to the cytochrome P450 family. It depends on heme as a cofactor. In terms of tissue distribution, expressed at low levels in roots.

The protein resides in the endoplasmic reticulum membrane. It localises to the microsome membrane. The catalysed reaction is (S)-tetrahydrocolumbamine + reduced [NADPH--hemoprotein reductase] + O2 = (S)-canadine + oxidized [NADPH--hemoprotein reductase] + 2 H2O + H(+). Involved in the last but one step of the biosynthesis of berberine, an antimicrobial benzylisoquinoline alkaloid. Converts (S)-tetrahydrocolumbamine (THC) to (S)-tetrahydroberberine (THB) also called (S)-canadine. The polypeptide is (S)-canadine synthase (CYP719A1) (Coptis japonica (Japanese goldthread)).